A 94-amino-acid chain; its full sequence is Co-chaperonin GroES (94 aa).

Belongs to the GroES chaperonin family. In terms of assembly, heptamer of 7 subunits arranged in a ring. Interacts with the chaperonin GroEL.

It localises to the cytoplasm. Its function is as follows. Together with the chaperonin GroEL, plays an essential role in assisting protein folding. The GroEL-GroES system forms a nano-cage that allows encapsulation of the non-native substrate proteins and provides a physical environment optimized to promote and accelerate protein folding. GroES binds to the apical surface of the GroEL ring, thereby capping the opening of the GroEL channel. In Staphylococcus epidermidis (strain ATCC 35984 / DSM 28319 / BCRC 17069 / CCUG 31568 / BM 3577 / RP62A), this protein is Co-chaperonin GroES.